Reading from the N-terminus, the 455-residue chain is Bifunctional protein GlmU (455 aa).

Positions 1–229 are pyrophosphorylase; the sequence is MSKKVMSVVI…LNEIEGINDG (229 aa). UDP-N-acetyl-alpha-D-glucosamine is bound by residues 11 to 14, K25, Q76, 81 to 82, 103 to 105, G140, E154, N169, and N227; these read LAAG, GT, and YGD. Residue D105 coordinates Mg(2+). N227 is a Mg(2+) binding site. Residues 230-250 form a linker region; sequence LQLARLERLFQKQQAEKLLLS. The segment at 251–455 is N-acetyltransferase; that stretch reads GVRILDPARF…IQGWKRPKKT (205 aa). Residues R333 and K351 each coordinate UDP-N-acetyl-alpha-D-glucosamine. H363 functions as the Proton acceptor in the catalytic mechanism. Y366 and N377 together coordinate UDP-N-acetyl-alpha-D-glucosamine. Acetyl-CoA-binding positions include A380, 386–387, S405, A423, and R440; that span reads NY.

This sequence in the N-terminal section; belongs to the N-acetylglucosamine-1-phosphate uridyltransferase family. In the C-terminal section; belongs to the transferase hexapeptide repeat family. In terms of assembly, homotrimer. Mg(2+) is required as a cofactor.

The protein resides in the cytoplasm. It carries out the reaction alpha-D-glucosamine 1-phosphate + acetyl-CoA = N-acetyl-alpha-D-glucosamine 1-phosphate + CoA + H(+). It catalyses the reaction N-acetyl-alpha-D-glucosamine 1-phosphate + UTP + H(+) = UDP-N-acetyl-alpha-D-glucosamine + diphosphate. It participates in nucleotide-sugar biosynthesis; UDP-N-acetyl-alpha-D-glucosamine biosynthesis; N-acetyl-alpha-D-glucosamine 1-phosphate from alpha-D-glucosamine 6-phosphate (route II): step 2/2. It functions in the pathway nucleotide-sugar biosynthesis; UDP-N-acetyl-alpha-D-glucosamine biosynthesis; UDP-N-acetyl-alpha-D-glucosamine from N-acetyl-alpha-D-glucosamine 1-phosphate: step 1/1. The protein operates within bacterial outer membrane biogenesis; LPS lipid A biosynthesis. Catalyzes the last two sequential reactions in the de novo biosynthetic pathway for UDP-N-acetylglucosamine (UDP-GlcNAc). The C-terminal domain catalyzes the transfer of acetyl group from acetyl coenzyme A to glucosamine-1-phosphate (GlcN-1-P) to produce N-acetylglucosamine-1-phosphate (GlcNAc-1-P), which is converted into UDP-GlcNAc by the transfer of uridine 5-monophosphate (from uridine 5-triphosphate), a reaction catalyzed by the N-terminal domain. This chain is Bifunctional protein GlmU, found in Hamiltonella defensa subsp. Acyrthosiphon pisum (strain 5AT).